The primary structure comprises 130 residues: Small ribosomal subunit protein uS9 (130 aa).

Belongs to the universal ribosomal protein uS9 family.

This Haemophilus influenzae (strain 86-028NP) protein is Small ribosomal subunit protein uS9.